A 635-amino-acid polypeptide reads, in one-letter code: 1-deoxy-D-xylulose-5-phosphate synthase (635 aa).

Thiamine diphosphate-binding positions include H79 and 120–122; that span reads GHS. Residue D151 participates in Mg(2+) binding. Thiamine diphosphate is bound by residues 152-153, N182, Y291, and E372; that span reads GA. N182 contacts Mg(2+).

It belongs to the transketolase family. DXPS subfamily. Homodimer. Mg(2+) is required as a cofactor. The cofactor is thiamine diphosphate.

The enzyme catalyses D-glyceraldehyde 3-phosphate + pyruvate + H(+) = 1-deoxy-D-xylulose 5-phosphate + CO2. Its pathway is metabolic intermediate biosynthesis; 1-deoxy-D-xylulose 5-phosphate biosynthesis; 1-deoxy-D-xylulose 5-phosphate from D-glyceraldehyde 3-phosphate and pyruvate: step 1/1. Catalyzes the acyloin condensation reaction between C atoms 2 and 3 of pyruvate and glyceraldehyde 3-phosphate to yield 1-deoxy-D-xylulose-5-phosphate (DXP). The sequence is that of 1-deoxy-D-xylulose-5-phosphate synthase from Xylella fastidiosa (strain M23).